A 514-amino-acid polypeptide reads, in one-letter code: Probable cytochrome P450 6w1 (514 aa).

Heme is bound at residue C450.

It belongs to the cytochrome P450 family. It depends on heme as a cofactor.

It localises to the endoplasmic reticulum membrane. Its subcellular location is the microsome membrane. May be involved in the metabolism of insect hormones and in the breakdown of synthetic insecticides. This chain is Probable cytochrome P450 6w1 (Cyp6w1), found in Drosophila melanogaster (Fruit fly).